Reading from the N-terminus, the 138-residue chain is Basic phospholipase A2 homolog promutoxin (138 aa).

The signal sequence occupies residues M1–G16. 7 disulfides stabilise this stretch: C42–C132, C44–C60, C59–C112, C65–C138, C66–C105, C73–C98, and C91–C103. Residues K122–K133 form an important for membrane-damaging activities in eukaryotes and bacteria; heparin-binding region.

The protein belongs to the phospholipase A2 family. Group II subfamily. R49 sub-subfamily. Homodimer; non-covalently linked. Expressed by the venom gland.

The protein resides in the secreted. Functionally, snake venom phospholipase A2 homolog that lacks enzymatic activity. Exhibits potent myotoxicity causing myonecrosis and edema in the gastrocnemius muscle of mice. Is also able to stimulate the release of IL12 (IL12A-IL12B), TNF-alpha (TNF), IL6 and IL1-beta (IL1B) from human monocytes, and induce IL2, TNFalpha and IL6 release from T-cells. A model of myotoxic mechanism has been proposed: an apo Lys49-PLA2 is activated by the entrance of a hydrophobic molecule (e.g. fatty acid) at the hydrophobic channel of the protein leading to a reorientation of a monomer. This reorientation causes a transition between 'inactive' to 'active' states, causing alignment of C-terminal and membrane-docking sites (MDoS) side-by-side and putting the membrane-disruption sites (MDiS) in the same plane, exposed to solvent and in a symmetric position for both monomers. The MDoS region stabilizes the toxin on membrane by the interaction of charged residues with phospholipid head groups. Subsequently, the MDiS region destabilizes the membrane with penetration of hydrophobic residues. This insertion causes a disorganization of the membrane, allowing an uncontrolled influx of ions (i.e. calcium and sodium), and eventually triggering irreversible intracellular alterations and cell death. The polypeptide is Basic phospholipase A2 homolog promutoxin (Protobothrops mucrosquamatus (Taiwan habu)).